The chain runs to 157 residues: MSQKIIDLVTAVVAPAIPDPYELVDIEYEKIGSDYILSVLIDKPGGITVEDTADLTEIISPLLDTIQPDPFPDQYMLEVSSPGLERPLKTKEALKNAVGQYINVSLYKAIDKIKIFQGDLLAFDGETLTIDYLDKTRHKTVEIPYQTVAKARLAVKL.

The protein belongs to the RimP family.

It is found in the cytoplasm. In terms of biological role, required for maturation of 30S ribosomal subunits. This is Ribosome maturation factor RimP from Streptococcus thermophilus (strain ATCC BAA-491 / LMD-9).